The primary structure comprises 277 residues: Large ribosomal subunit protein uL2 (277 aa).

2 disordered regions span residues 34 to 55 and 213 to 277; these read LQPLPKKAGRNNQGKLTVRHHG and WKGI…RKKK.

The protein belongs to the universal ribosomal protein uL2 family. Part of the 50S ribosomal subunit. Forms a bridge to the 30S subunit in the 70S ribosome.

One of the primary rRNA binding proteins. Required for association of the 30S and 50S subunits to form the 70S ribosome, for tRNA binding and peptide bond formation. It has been suggested to have peptidyltransferase activity; this is somewhat controversial. Makes several contacts with the 16S rRNA in the 70S ribosome. This Staphylococcus haemolyticus (strain JCSC1435) protein is Large ribosomal subunit protein uL2.